We begin with the raw amino-acid sequence, 106 residues long: Acylphosphatase-2 (106 aa).

Residues 16–106 (SVDYEVFGTV…LEYSDFSIRY (91 aa)) form the Acylphosphatase-like domain. Active-site residues include arginine 31 and asparagine 49. At serine 100 the chain carries Phosphoserine.

It belongs to the acylphosphatase family.

It catalyses the reaction an acyl phosphate + H2O = a carboxylate + phosphate + H(+). In Mus musculus (Mouse), this protein is Acylphosphatase-2 (Acyp2).